Reading from the N-terminus, the 186-residue chain is Protein GrpE (186 aa).

Over residues Met1–Glu17 the composition is skewed to basic and acidic residues. The segment at Met1 to Ala32 is disordered.

The protein belongs to the GrpE family. In terms of assembly, homodimer.

Its subcellular location is the cytoplasm. Participates actively in the response to hyperosmotic and heat shock by preventing the aggregation of stress-denatured proteins, in association with DnaK and GrpE. It is the nucleotide exchange factor for DnaK and may function as a thermosensor. Unfolded proteins bind initially to DnaJ; upon interaction with the DnaJ-bound protein, DnaK hydrolyzes its bound ATP, resulting in the formation of a stable complex. GrpE releases ADP from DnaK; ATP binding to DnaK triggers the release of the substrate protein, thus completing the reaction cycle. Several rounds of ATP-dependent interactions between DnaJ, DnaK and GrpE are required for fully efficient folding. This is Protein GrpE from Helicobacter acinonychis (strain Sheeba).